Reading from the N-terminus, the 514-residue chain is L-carnitine/gamma-butyrobetaine antiporter (514 aa).

The Cytoplasmic segment spans residues 1 to 11 (MSKDNKKAGIE). A helical transmembrane segment spans residues 12 to 30 (PKVFFPPLIIVGILCWLTV). Over 31-42 (RDLDASNEVINA) the chain is Periplasmic. Residues 43–68 (VFSYVTNVWGWAFEWYMVIMFGGWFW) form a helical membrane-spanning segment. Residues 69 to 91 (LVFGRYAKKRLGDEKPEFSTASW) are Cytoplasmic-facing. The helical transmembrane segment at 92–112 (IFMMFASCTSAAVLFWGSIEI) threads the bilayer. The Periplasmic portion of the chain corresponds to 113-131 (YYYISSPPFGMEGYSAPAK). A helical membrane pass occupies residues 132 to 154 (EIGLAYSLFHWGPLPWATYSFLS). The Cytoplasmic portion of the chain corresponds to 155–185 (VAFAYFFFVRKMEVIRPSSTLTPLVGEKHVN). A helical membrane pass occupies residues 186-216 (GLFGTVVDNFYLVALILAMGTSLGLATPLVT). Topologically, residues 217 to 230 (ECIQYLFGIPHTLQ) are periplasmic. A helical transmembrane segment spans residues 231 to 249 (LDAIIISCWILLNAICVAF). The Cytoplasmic segment spans residues 250–251 (GL). The helical transmembrane segment at 252-277 (QKGVKIASDVRTYLSFLMLGWVFIVG) threads the bilayer. Residues 278 to 311 (GASFIVNYFTDSVGTLLMYMPRMLFYTDPIGKGG) are Periplasmic-facing. A helical membrane pass occupies residues 312 to 335 (FPQAWTVFYWAWWVIYAIQMSIFL). Topologically, residues 336-347 (ARISKGRTVREL) are cytoplasmic. The helical transmembrane segment at 348 to 369 (CLGMVSGLTAGTWLIWTILGGN) threads the bilayer. The Periplasmic portion of the chain corresponds to 370 to 404 (TLQLIDQNILNIPQLIDQYGVPRAIIETWAALPLS). The chain crosses the membrane as a helical span at residues 405-434 (TATMWGFFILCFIATVTLINACSYTLAMST). Residues 435–445 (CRSMKEGAEPP) lie on the Cytoplasmic side of the membrane. The helical transmembrane segment at 446–464 (LLVRIGWSVLVGIIGIILL) threads the bilayer. Residues 465 to 468 (ALGG) lie on the Periplasmic side of the membrane. Residues 469-492 (LKPIQTAIIAGGCPLFFVNIMVTL) traverse the membrane as a helical segment. At 493–514 (SFIKDAKVHWKDCSPYTQKMTH) the chain is on the cytoplasmic side.

This sequence belongs to the BCCT transporter (TC 2.A.15) family. CaiT subfamily. As to quaternary structure, homotrimer.

It localises to the cell inner membrane. The catalysed reaction is 4-(trimethylamino)butanoate(in) + (R)-carnitine(out) = 4-(trimethylamino)butanoate(out) + (R)-carnitine(in). Its pathway is amine and polyamine metabolism; carnitine metabolism. Functionally, catalyzes the exchange of L-carnitine for gamma-butyrobetaine. This Proteus mirabilis (strain HI4320) protein is L-carnitine/gamma-butyrobetaine antiporter.